The chain runs to 44 residues: Endochitinase 1 (44 aa).

This sequence belongs to the glycosyl hydrolase 19 family. Chitinase class I subfamily.

The catalysed reaction is Random endo-hydrolysis of N-acetyl-beta-D-glucosaminide (1-&gt;4)-beta-linkages in chitin and chitodextrins.. Functionally, defense against chitin-containing fungal pathogens. This Capsicum chinense (Scotch bonnet) protein is Endochitinase 1.